The following is a 77-amino-acid chain: Pollen allergen Amb p 5a (77 aa).

The first 22 residues, 1–22 (MNNEKNVSFEFIGSTDEVDEIK), serve as a signal peptide directing secretion. 4 cysteine pairs are disulfide-bonded: Cys26/Cys61, Cys33/Cys48, Cys40/Cys54, and Cys41/Cys65.

This Ambrosia psilostachya (Western ragweed) protein is Pollen allergen Amb p 5a.